The sequence spans 98 residues: Co-chaperonin GroES (98 aa).

It belongs to the GroES chaperonin family. In terms of assembly, heptamer of 7 subunits arranged in a ring. Interacts with the chaperonin GroEL.

It localises to the cytoplasm. In terms of biological role, together with the chaperonin GroEL, plays an essential role in assisting protein folding. The GroEL-GroES system forms a nano-cage that allows encapsulation of the non-native substrate proteins and provides a physical environment optimized to promote and accelerate protein folding. GroES binds to the apical surface of the GroEL ring, thereby capping the opening of the GroEL channel. The chain is Co-chaperonin GroES from Paenarthrobacter aurescens (strain TC1).